Reading from the N-terminus, the 1279-residue chain is ATP-dependent helicase/nuclease subunit A (1279 aa).

Residues 4-499 (TKWTDEQRQA…VKLFKNFRSR (496 aa)) enclose the UvrD-like helicase ATP-binding domain. An ATP-binding site is contributed by 25–32 (AGAGAGKT). Residues 526-853 (EEALKVGASY…RIMSIHKSKG (328 aa)) form the UvrD-like helicase C-terminal domain.

The protein belongs to the helicase family. AddA subfamily. In terms of assembly, heterodimer of AddA and AddB/RexB. Requires Mg(2+) as cofactor.

It catalyses the reaction Couples ATP hydrolysis with the unwinding of duplex DNA by translocating in the 3'-5' direction.. The enzyme catalyses ATP + H2O = ADP + phosphate + H(+). In terms of biological role, the heterodimer acts as both an ATP-dependent DNA helicase and an ATP-dependent, dual-direction single-stranded exonuclease. Recognizes the chi site generating a DNA molecule suitable for the initiation of homologous recombination. The AddA nuclease domain is required for chi fragment generation; this subunit has the helicase and 3' -&gt; 5' nuclease activities. This is ATP-dependent helicase/nuclease subunit A from Clostridium botulinum (strain 657 / Type Ba4).